The primary structure comprises 713 residues: MKYLKLFLLLFIIQTQAQQGGMWIPSLLSGMNETEMKNLGMKISADDIYSVNHSSLKDAVPHFNGGCTSEVISPKGLILTNHHCGFDAIQNHSSVDHDYLTNGFWAMKMEDELPNENLVVTFIVSINDVTAQVLDGVASITSETEKQNKIQENITKVTASFAKEAWQENKVRTFFEGNQYILFVTEVFKDVRLVGAPPSLIGKFGSDTDNWVWPRHTGDFSMFRVYANKNNHPAAYSKDNVPYIPKHFLPVSLDGVQEDDFTMVMGYPGKTQEYLPSFAVAQIVNETNPAKIEIREAALKVQDGFMRKDNAIKIQYASKYAGVANYWKKWIGESQGLKKSNAIGLKQNFEKDFQQKVIAAGKQNEYGNLLADFQKYYTEITPYAVSRDYFNEVVVKNTELLSLGYKLYQLEQVFITKGEQAFNDRKENLIKSQADFFKDFNATVDEKVFEQLVALYATKAPKEFLPISLLNVEYKKFAPSIYSKSKLVDYANFKALLSGDAKAVLKKISLDKGYAFVKSLADNYSKNIAPRYDEINLKINALQRIYMKAQLELYPNSRIFPDANSTLRVTYGKVKGYSPKDAIYYNPTTYLDGAIEKYIPGDYEFDVPKKLIDLYNNKDYGQYGENGKLPVCFIGTNHTTGGNSGSPAVDAQGNLIGLNFDRVWEGTMSDIHYDPSICRNVMVDMRYVLFIVDKFAGAKHLINEMKLVHPKKK.

The signal sequence occupies residues 1–17 (MKYLKLFLLLFIIQTQA). Active-site charge relay system residues include histidine 83, aspartate 219, and serine 644.

Belongs to the peptidase S46 family.

In terms of biological role, catalyzes the removal of dipeptides from the N-terminus of oligopeptides. Shows a strict specificity for acidic residues (Asp or Glu) in the P1 position, and has probably a hydrophobic residue preference at the P2 position. Preferentially cleaves the synthetic substrate Leu-Asp-methylcoumaryl-7-amide (Leu-Asp-MCA) as compared to Leu-Glu-MCA. In Flavobacterium psychrophilum (strain ATCC 49511 / DSM 21280 / CIP 103535 / JIP02/86), this protein is Asp/Glu-specific dipeptidyl-peptidase (dpp11).